A 386-amino-acid polypeptide reads, in one-letter code: Succinyl-diaminopimelate desuccinylase (386 aa).

H75 is a Zn(2+) binding site. The active site involves D77. D108 contacts Zn(2+). Catalysis depends on E138, which acts as the Proton acceptor. Zn(2+) is bound by residues E139, E167, and H356.

The protein belongs to the peptidase M20A family. DapE subfamily. In terms of assembly, homodimer. Zn(2+) is required as a cofactor. Co(2+) serves as cofactor.

It catalyses the reaction N-succinyl-(2S,6S)-2,6-diaminopimelate + H2O = (2S,6S)-2,6-diaminopimelate + succinate. The protein operates within amino-acid biosynthesis; L-lysine biosynthesis via DAP pathway; LL-2,6-diaminopimelate from (S)-tetrahydrodipicolinate (succinylase route): step 3/3. Its function is as follows. Catalyzes the hydrolysis of N-succinyl-L,L-diaminopimelic acid (SDAP), forming succinate and LL-2,6-diaminopimelate (DAP), an intermediate involved in the bacterial biosynthesis of lysine and meso-diaminopimelic acid, an essential component of bacterial cell walls. The sequence is that of Succinyl-diaminopimelate desuccinylase from Caulobacter vibrioides (strain ATCC 19089 / CIP 103742 / CB 15) (Caulobacter crescentus).